Reading from the N-terminus, the 270-residue chain is Elongation factor Tu (270 aa).

One can recognise a tr-type G domain in the interval G1–E103. N35–D38 serves as a coordination point for GTP.

This sequence belongs to the TRAFAC class translation factor GTPase superfamily. Classic translation factor GTPase family. EF-Tu/EF-1A subfamily. Monomer.

It is found in the cytoplasm. The catalysed reaction is GTP + H2O = GDP + phosphate + H(+). In terms of biological role, GTP hydrolase that promotes the GTP-dependent binding of aminoacyl-tRNA to the A-site of ribosomes during protein biosynthesis. This Staphylococcus warneri protein is Elongation factor Tu (tuf).